Here is a 54-residue protein sequence, read N- to C-terminus: U1-ctenitoxin-Pr1a (54 aa).

5 disulfide bridges follow: C2–C19, C9–C25, C16–C51, C18–C39, and C27–C37.

As to expression, expressed by the venom gland.

It localises to the secreted. Its function is as follows. Omega-agatoxins are antagonists of voltage-gated calcium channels (Cav). Causes rapid general flaccid paralysis followed by death in 10-30 minutes when injected in mice at dose levels of 5 ug per mouse. This chain is U1-ctenitoxin-Pr1a, found in Phoneutria reidyi (Brazilian Amazonian armed spider).